The sequence spans 512 residues: Histidine ammonia-lyase (512 aa).

The segment at residues 141 to 143 (ASG) is a cross-link (5-imidazolinone (Ala-Gly)). Ser142 carries the 2,3-didehydroalanine (Ser) modification.

This sequence belongs to the PAL/histidase family. In terms of processing, contains an active site 4-methylidene-imidazol-5-one (MIO), which is formed autocatalytically by cyclization and dehydration of residues Ala-Ser-Gly.

It localises to the cytoplasm. It carries out the reaction L-histidine = trans-urocanate + NH4(+). It participates in amino-acid degradation; L-histidine degradation into L-glutamate; N-formimidoyl-L-glutamate from L-histidine: step 1/3. The polypeptide is Histidine ammonia-lyase (Bacillus velezensis (strain DSM 23117 / BGSC 10A6 / LMG 26770 / FZB42) (Bacillus amyloliquefaciens subsp. plantarum)).